The sequence spans 202 residues: MSRYRGPRVKIIRRLGALPGLTNKTPQLKSSPINQSTSNKKISQYRIRLEEKQKLRFHYGITERQLLNYVRIARKAKGSTGEILLQLLEMRLDNVIFRLGMSPTIPGARQLVNHRHILVNGHIVDIPSYRCKPQDFITIKNQRKSQAIINKNMNFYRKYKIPNHLIYNSLDKKGLVNQILDRESIGLKINELLVVEYYSRQA.

The region spanning 90-150 (MRLDNVIFRL…NQRKSQAIIN (61 aa)) is the S4 RNA-binding domain.

The protein belongs to the universal ribosomal protein uS4 family. In terms of assembly, part of the 30S ribosomal subunit. Contacts protein S5. The interaction surface between S4 and S5 is involved in control of translational fidelity.

The protein resides in the plastid. It is found in the chloroplast. In terms of biological role, one of the primary rRNA binding proteins, it binds directly to 16S rRNA where it nucleates assembly of the body of the 30S subunit. With S5 and S12 plays an important role in translational accuracy. The polypeptide is Small ribosomal subunit protein uS4c (rps4) (Canalohypopterygium tamariscinum (Moss)).